Reading from the N-terminus, the 428-residue chain is tRNA(Ile)-lysidine synthase (428 aa).

Residue 28 to 33 coordinates ATP; sequence SGGVDS.

It belongs to the tRNA(Ile)-lysidine synthase family.

The protein resides in the cytoplasm. The catalysed reaction is cytidine(34) in tRNA(Ile2) + L-lysine + ATP = lysidine(34) in tRNA(Ile2) + AMP + diphosphate + H(+). Its function is as follows. Ligates lysine onto the cytidine present at position 34 of the AUA codon-specific tRNA(Ile) that contains the anticodon CAU, in an ATP-dependent manner. Cytidine is converted to lysidine, thus changing the amino acid specificity of the tRNA from methionine to isoleucine. This is tRNA(Ile)-lysidine synthase from Streptococcus pyogenes serotype M3 (strain ATCC BAA-595 / MGAS315).